Here is a 235-residue protein sequence, read N- to C-terminus: MSNKLLYSGKAKDIFSTDDEQVILARYKDQATAFNGVKKEQIAGKGVLNNQISSFIFEKLNAAGVATHFIGKVSDTDQLNKKVEIIPLEVVLRNYTAGSFSKRFGVEEGIALETPIVEFYYKNDDLDDPFINDEHVKFLKIASDQEIAFLKEETRRINKLLSDWFRQIGLKLIDFKLEFGFDKDGKIILADEFSPDNCRLWDAEGHHMDKDVFRRGLGELTDVYQVVWEKLQAIK.

The protein belongs to the SAICAR synthetase family.

The enzyme catalyses 5-amino-1-(5-phospho-D-ribosyl)imidazole-4-carboxylate + L-aspartate + ATP = (2S)-2-[5-amino-1-(5-phospho-beta-D-ribosyl)imidazole-4-carboxamido]succinate + ADP + phosphate + 2 H(+). It participates in purine metabolism; IMP biosynthesis via de novo pathway; 5-amino-1-(5-phospho-D-ribosyl)imidazole-4-carboxamide from 5-amino-1-(5-phospho-D-ribosyl)imidazole-4-carboxylate: step 1/2. The polypeptide is Phosphoribosylaminoimidazole-succinocarboxamide synthase (Streptococcus sanguinis (strain SK36)).